A 101-amino-acid polypeptide reads, in one-letter code: MDKSKRLFLKSKRSFRRRLPPIQSGDRIDYRNMSLISRFISEQGKILSRRVNRLTLKQQRLITIAIKQARILSSLPFLNNEKQFERSESTTRTTALRTRNK.

It belongs to the bacterial ribosomal protein bS18 family. In terms of assembly, part of the 30S ribosomal subunit.

The protein resides in the plastid. The protein localises to the chloroplast. This chain is Small ribosomal subunit protein bS18c, found in Gossypium hirsutum (Upland cotton).